We begin with the raw amino-acid sequence, 87 residues long: UPF0213 protein SSA_0709 (87 aa).

The GIY-YIG domain occupies 3 to 78; sequence NKAYMYVLEC…KKKTRQAKLA (76 aa).

This sequence belongs to the UPF0213 family.

The polypeptide is UPF0213 protein SSA_0709 (Streptococcus sanguinis (strain SK36)).